Consider the following 227-residue polypeptide: Thymidylate kinase (227 aa).

16-23 (GIDGAGKT) is an ATP binding site.

The protein belongs to the thymidylate kinase family.

The enzyme catalyses dTMP + ATP = dTDP + ADP. Its function is as follows. Phosphorylation of dTMP to form dTDP in both de novo and salvage pathways of dTTP synthesis. This chain is Thymidylate kinase, found in Xanthomonas campestris pv. campestris (strain 8004).